The chain runs to 424 residues: Light-independent protochlorophyllide reductase subunit N (424 aa).

[4Fe-4S] cluster-binding residues include Cys-27, Cys-52, and Cys-113.

This sequence belongs to the BchN/ChlN family. In terms of assembly, protochlorophyllide reductase is composed of three subunits; BchL, BchN and BchB. Forms a heterotetramer of two BchB and two BchN subunits. Requires [4Fe-4S] cluster as cofactor.

The enzyme catalyses chlorophyllide a + oxidized 2[4Fe-4S]-[ferredoxin] + 2 ADP + 2 phosphate = protochlorophyllide a + reduced 2[4Fe-4S]-[ferredoxin] + 2 ATP + 2 H2O. Its pathway is porphyrin-containing compound metabolism; bacteriochlorophyll biosynthesis (light-independent). Component of the dark-operative protochlorophyllide reductase (DPOR) that uses Mg-ATP and reduced ferredoxin to reduce ring D of protochlorophyllide (Pchlide) to form chlorophyllide a (Chlide). This reaction is light-independent. The NB-protein (BchN-BchB) is the catalytic component of the complex. The protein is Light-independent protochlorophyllide reductase subunit N of Halorhodospira halophila (strain DSM 244 / SL1) (Ectothiorhodospira halophila (strain DSM 244 / SL1)).